The primary structure comprises 448 residues: Phosphohexose mutases (448 aa).

The active-site Phosphoserine intermediate is Ser-97. Ser-97, Asp-237, Asp-239, and Asp-241 together coordinate Mg(2+).

This sequence belongs to the phosphohexose mutase family. It depends on Mg(2+) as a cofactor.

It carries out the reaction alpha-D-glucose 1-phosphate = alpha-D-glucose 6-phosphate. The enzyme catalyses alpha-D-mannose 1-phosphate = D-mannose 6-phosphate. It participates in nucleotide-sugar biosynthesis; GDP-alpha-D-mannose biosynthesis; alpha-D-mannose 1-phosphate from D-fructose 6-phosphate: step 2/2. Functionally, involved in xanthan production. The chain is Phosphohexose mutases (xanA) from Xanthomonas campestris pv. campestris (strain B100).